The following is a 471-amino-acid chain: Methylenetetrahydrofolate--tRNA-(uracil-5-)-methyltransferase TrmFO (471 aa).

Residue 9–14 (GGGLSG) participates in FAD binding.

This sequence belongs to the MnmG family. TrmFO subfamily. The cofactor is FAD.

Its subcellular location is the cytoplasm. It catalyses the reaction uridine(54) in tRNA + (6R)-5,10-methylene-5,6,7,8-tetrahydrofolate + NADH + H(+) = 5-methyluridine(54) in tRNA + (6S)-5,6,7,8-tetrahydrofolate + NAD(+). The enzyme catalyses uridine(54) in tRNA + (6R)-5,10-methylene-5,6,7,8-tetrahydrofolate + NADPH + H(+) = 5-methyluridine(54) in tRNA + (6S)-5,6,7,8-tetrahydrofolate + NADP(+). Its function is as follows. Catalyzes the folate-dependent formation of 5-methyl-uridine at position 54 (M-5-U54) in all tRNAs. This Beijerinckia indica subsp. indica (strain ATCC 9039 / DSM 1715 / NCIMB 8712) protein is Methylenetetrahydrofolate--tRNA-(uracil-5-)-methyltransferase TrmFO.